The following is a 308-amino-acid chain: Probable acetylxylan esterase A (308 aa).

Positions 1-19 are cleaved as a signal peptide; sequence MAPFSFLLTLLLYTLSAGA. An N-linked (GlcNAc...) asparagine glycan is attached at asparagine 141. Serine 151 functions as the Charge relay system in the catalytic mechanism. Asparagine 193 carries an N-linked (GlcNAc...) asparagine glycan.

It belongs to the carbohydrate esterase 1 (CE1) family. AxeA subfamily. As to quaternary structure, monomer.

It localises to the secreted. It catalyses the reaction Deacetylation of xylans and xylo-oligosaccharides.. Its pathway is glycan degradation; xylan degradation. Acetylxylan esterase involved in the hydrolysis of xylan, a major structural heterogeneous polysaccharide found in plant biomass representing the second most abundant polysaccharide in the biosphere, after cellulose. Degrades acetylated xylans by cleaving acetyl side groups from the hetero-xylan backbone. In Aspergillus clavatus (strain ATCC 1007 / CBS 513.65 / DSM 816 / NCTC 3887 / NRRL 1 / QM 1276 / 107), this protein is Probable acetylxylan esterase A (axeA).